We begin with the raw amino-acid sequence, 263 residues long: Probable elongation factor 1-beta/1-delta 2 (263 aa).

Residue serine 2 is modified to N-acetylserine. Residues 112-153 (QGQTSSVAAPAAAPAAAKEEAAGDDDFDLFGSEDEEEDEEKK) form a disordered region. The span at 133-150 (AGDDDFDLFGSEDEEEDE) shows a compositional bias: acidic residues.

Belongs to the EF-1-beta/EF-1-delta family. EF-1 is composed of 4 subunits: alpha, beta, delta, and gamma.

EF-1-beta and EF-1-delta stimulate the exchange of GDP bound to EF-1-alpha to GTP. This chain is Probable elongation factor 1-beta/1-delta 2, found in Caenorhabditis elegans.